The sequence spans 216 residues: Thioredoxin-like 2, chloroplastic (216 aa).

Residues 1–58 constitute a chloroplast transit peptide; sequence MAEALLPLPRRLVVTASTPACSSASSSTSPSPHCLLSRANPRPPRLAAPSPPRHRRLK. Low complexity predominate over residues 19-40; the sequence is PACSSASSSTSPSPHCLLSRAN. A disordered region spans residues 19 to 70; the sequence is PACSSASSSTSPSPHCLLSRANPRPPRLAAPSPPRHRRLKAHAAVSDKSEQP. Over residues 41-51 the composition is skewed to pro residues; sequence PRPPRLAAPSP. One can recognise a Thioredoxin domain in the interval 61-188; the sequence is AAVSDKSEQP…LKDAIAVHNT (128 aa). Catalysis depends on nucleophile residues C111 and C114. An intrachain disulfide couples C111 to C114.

This sequence belongs to the thioredoxin family.

The protein resides in the plastid. It localises to the chloroplast. In terms of biological role, probable thiol-disulfide oxidoreductase that may participate in various redox reactions. This is Thioredoxin-like 2, chloroplastic from Oryza sativa subsp. japonica (Rice).